We begin with the raw amino-acid sequence, 989 residues long: Zinc finger SWIM domain-containing protein 4 (989 aa).

Residues 1–32 are disordered; that stretch reads MEPPAAKRSRGCPAGPEERDAGAGAARGRGRP. An SWIM-type zinc finger spans residues 139 to 176; that stretch reads YHVSISFDRCKITSVSCGCDNRDLFYCAHVVALSLYRI.

The polypeptide is Zinc finger SWIM domain-containing protein 4 (ZSWIM4) (Homo sapiens (Human)).